The chain runs to 263 residues: Virulence plasmid protein pGP6-D-related protein (263 aa).

Belongs to the UPF0137 (pGP6-D) family.

The sequence is that of Virulence plasmid protein pGP6-D-related protein from Chlamydia trachomatis serovar D (strain ATCC VR-885 / DSM 19411 / UW-3/Cx).